We begin with the raw amino-acid sequence, 492 residues long: Probable sphingolipid transporter spinster homolog 1 (492 aa).

A helical membrane pass occupies residues 29–49 (FVTILCIINLINYVDRGVIAS). Residues Asn53 and Asn76 are each glycosylated (N-linked (GlcNAc...) asparagine). Transmembrane regions (helical) follow at residues 83-103 (GLLSSAFMVGLLVASPIFAGL), 119-139 (VWTIAVIGCGFSYNFWMIAVF), 141-161 (MFVGVGEASFISLAAPYIDDS), 169-189 (FWLGLFYMCIPAGVALGYVFG), 200-220 (WAFYIEAIAMAVFVILSFCIK), 279-299 (VFIVNVLGYITYNFVIGAYSY), and 317-337 (IFGGLTIICGIIGTLGGSYVL). N-linked (GlcNAc...) asparagine glycosylation occurs at Asn341. 4 helical membrane passes run 348–368 (FKLLAASTLLGAAFCFTAFLM), 372–392 (YAFIALFAVGEILIFAPQAPV), 407–427 (LSMASSTVLIHILGDVPSSPL), and 442–462 (TLIITSILFLAAIIWGIGIFM). Ser472 is subject to Phosphoserine. Positions 472–481 (SEDDEVEEDK) are enriched in acidic residues. The segment at 472–492 (SEDDEVEEDKLESKTENSTLA) is disordered. Asn488 carries N-linked (GlcNAc...) asparagine glycosylation.

It belongs to the major facilitator superfamily. Spinster (TC 2.A.1.49) family.

It localises to the late endosome membrane. Its subcellular location is the lysosome membrane. Its function is as follows. Probable sphingolipid transporter that plays a central role in endosomes and/or lysosomes storage. In Arabidopsis thaliana (Mouse-ear cress), this protein is Probable sphingolipid transporter spinster homolog 1.